The sequence spans 442 residues: Tryptophan synthase beta chain 2 (442 aa).

Residue K122 is modified to N6-(pyridoxal phosphate)lysine.

The protein belongs to the TrpB family. Tetramer of two alpha and two beta chains. It depends on pyridoxal 5'-phosphate as a cofactor.

The catalysed reaction is (1S,2R)-1-C-(indol-3-yl)glycerol 3-phosphate + L-serine = D-glyceraldehyde 3-phosphate + L-tryptophan + H2O. It participates in amino-acid biosynthesis; L-tryptophan biosynthesis; L-tryptophan from chorismate: step 5/5. The beta subunit is responsible for the synthesis of L-tryptophan from indole and L-serine. The protein is Tryptophan synthase beta chain 2 (trpB2) of Methanosarcina mazei (strain ATCC BAA-159 / DSM 3647 / Goe1 / Go1 / JCM 11833 / OCM 88) (Methanosarcina frisia).